Consider the following 776-residue polypeptide: DNA topoisomerase 1 (776 aa).

The Toprim domain maps to 1–111; that stretch reads MKLVIVESPA…VKSDDFFKRV (111 aa). E7 and D80 together coordinate Mg(2+). The region spanning 132 to 568 is the Topo IA-type catalytic domain; that stretch reads DANLVNAQQA…FWSGFNHNIE (437 aa). The segment at 166–171 is interaction with DNA; sequence SAGRVQ. Y304 serves as the catalytic O-(5'-phospho-DNA)-tyrosine intermediate. The C4-type zinc-finger motif lies at 600–627; it reads CPSCKTGELSLKLGKFGAFLACSNYPEC.

The protein belongs to the type IA topoisomerase family. In terms of assembly, monomer. Requires Mg(2+) as cofactor.

It carries out the reaction ATP-independent breakage of single-stranded DNA, followed by passage and rejoining.. In terms of biological role, releases the supercoiling and torsional tension of DNA, which is introduced during the DNA replication and transcription, by transiently cleaving and rejoining one strand of the DNA duplex. Introduces a single-strand break via transesterification at a target site in duplex DNA. The scissile phosphodiester is attacked by the catalytic tyrosine of the enzyme, resulting in the formation of a DNA-(5'-phosphotyrosyl)-enzyme intermediate and the expulsion of a 3'-OH DNA strand. The free DNA strand then undergoes passage around the unbroken strand, thus removing DNA supercoils. Finally, in the religation step, the DNA 3'-OH attacks the covalent intermediate to expel the active-site tyrosine and restore the DNA phosphodiester backbone. The polypeptide is DNA topoisomerase 1 (Rickettsia felis (strain ATCC VR-1525 / URRWXCal2) (Rickettsia azadi)).